We begin with the raw amino-acid sequence, 529 residues long: Peptide chain release factor 3 (529 aa).

The tr-type G domain occupies 11–280; that stretch reads AKRRTFAIIS…GLVEWAPAPM (270 aa). Residues 20-27, 88-92, and 142-145 contribute to the GTP site; these read SHPDAGKT, DTPGH, and NKLD.

Belongs to the TRAFAC class translation factor GTPase superfamily. Classic translation factor GTPase family. PrfC subfamily.

The protein localises to the cytoplasm. Its function is as follows. Increases the formation of ribosomal termination complexes and stimulates activities of RF-1 and RF-2. It binds guanine nucleotides and has strong preference for UGA stop codons. It may interact directly with the ribosome. The stimulation of RF-1 and RF-2 is significantly reduced by GTP and GDP, but not by GMP. The protein is Peptide chain release factor 3 of Citrobacter koseri (strain ATCC BAA-895 / CDC 4225-83 / SGSC4696).